Reading from the N-terminus, the 451-residue chain is UDP-N-acetylmuramoylalanine--D-glutamate ligase (451 aa).

Position 119–125 (119–125 (GSNGKTT)) interacts with ATP.

It belongs to the MurCDEF family.

The protein localises to the cytoplasm. The catalysed reaction is UDP-N-acetyl-alpha-D-muramoyl-L-alanine + D-glutamate + ATP = UDP-N-acetyl-alpha-D-muramoyl-L-alanyl-D-glutamate + ADP + phosphate + H(+). It participates in cell wall biogenesis; peptidoglycan biosynthesis. Its function is as follows. Cell wall formation. Catalyzes the addition of glutamate to the nucleotide precursor UDP-N-acetylmuramoyl-L-alanine (UMA). This chain is UDP-N-acetylmuramoylalanine--D-glutamate ligase, found in Streptococcus agalactiae serotype III (strain NEM316).